The chain runs to 305 residues: L-lactate dehydrogenase (305 aa).

NAD(+)-binding positions include Val11, Asp32, Lys37, and 76 to 77; that span reads GV. Residues Gln79, Arg85, and 117 to 120 each bind substrate; that span reads NPVD. Residues 115–117 and Ser140 each bind NAD(+); that span reads ATN. 145-148 is a substrate binding site; the sequence is DTAR. Beta-D-fructose 1,6-bisphosphate is bound by residues Arg150 and His165. His172 functions as the Proton acceptor in the catalytic mechanism. At Tyr218 the chain carries Phosphotyrosine. Thr227 contacts substrate.

Belongs to the LDH/MDH superfamily. LDH family. In terms of assembly, homotetramer.

It is found in the cytoplasm. The catalysed reaction is (S)-lactate + NAD(+) = pyruvate + NADH + H(+). The protein operates within fermentation; pyruvate fermentation to lactate; (S)-lactate from pyruvate: step 1/1. Its activity is regulated as follows. Allosterically activated by fructose 1,6-bisphosphate (FBP). In terms of biological role, catalyzes the conversion of lactate to pyruvate. This is L-lactate dehydrogenase from Chloroherpeton thalassium (strain ATCC 35110 / GB-78).